The primary structure comprises 639 residues: MGRIIGIDLGTTNSCVAVLDGEKAKVIENAEGDRTTPSIIAYSQDGETLVGQPAKRQAITNPKNTLFAIKRLIGRRFEDKEVQRDIDIMPFDIIKADNGDAWVQAKDEKLAPPQISAEVLKKMKKTAEDYLGEEVTAAVITVPAYFNDSQRQATKDAGRIAGLEVKRIINEPTAAALAYGMDKKKGDSVVAVYDLGGGTFDISIIEIDEADGEHTFEVLATNGDTHLGGEDFDNQVINYLVEEFKKDSGMDLRKDPLAMQRLKEAGEKAKIELSSAQQTEVNLPYITADASGPKHLTIKLTRAKLESLVEKMVKATLEPLKQALADADLSVGDINDIILVGGQTRMPLVQKYVTEFFGKEPRKDVNPDEAVAVGAAIQGGVLSGDVKDVLLLDVTPLSLGIETMGGVMTALIEKNTTVPTKKSQTFSTAEDNQSAVTVHVLQGERKQAAGNKSLGQFNLEGIRPAQRGAPQIEVTFDIDADGILHVSAKDKDTNKEQKITIKASSGLSDDEVEKMVQDAEANKEADKQFEEMVQARNQADGLIHGTRKQVEEAGDALSDEDKAEIEAAVVALEEAVKAGEKEAIESKTQELIQASAKLMEVAQAQQAAAGAEGQPEDASAKQDDDVVDAEFEEVKDDKK.

T199 carries the phosphothreonine; by autocatalysis modification. A compositionally biased stretch (low complexity) spans 602 to 613 (AQAQQAAAGAEG). Positions 602 to 639 (AQAQQAAAGAEGQPEDASAKQDDDVVDAEFEEVKDDKK) are disordered. A compositionally biased stretch (acidic residues) spans 625–639 (DVVDAEFEEVKDDKK).

The protein belongs to the heat shock protein 70 family.

In terms of biological role, acts as a chaperone. This is Chaperone protein DnaK from Pseudoalteromonas atlantica (strain T6c / ATCC BAA-1087).